The sequence spans 270 residues: Hydroxyethylthiazole kinase (270 aa).

Methionine 47 contacts substrate. Residues arginine 123 and threonine 169 each coordinate ATP. Substrate is bound at residue glycine 196.

It belongs to the Thz kinase family. Requires Mg(2+) as cofactor.

It catalyses the reaction 5-(2-hydroxyethyl)-4-methylthiazole + ATP = 4-methyl-5-(2-phosphooxyethyl)-thiazole + ADP + H(+). It functions in the pathway cofactor biosynthesis; thiamine diphosphate biosynthesis; 4-methyl-5-(2-phosphoethyl)-thiazole from 5-(2-hydroxyethyl)-4-methylthiazole: step 1/1. In terms of biological role, catalyzes the phosphorylation of the hydroxyl group of 4-methyl-5-beta-hydroxyethylthiazole (THZ). In Roseiflexus castenholzii (strain DSM 13941 / HLO8), this protein is Hydroxyethylthiazole kinase.